The primary structure comprises 366 residues: Chorismate synthase (366 aa).

Positions 48 and 54 each coordinate NADP(+). FMN is bound by residues 125–127, 238–239, Gly278, 293–297, and Arg319; these read RSS, NA, and KPTSS.

Belongs to the chorismate synthase family. In terms of assembly, homotetramer. Requires FMNH2 as cofactor.

It catalyses the reaction 5-O-(1-carboxyvinyl)-3-phosphoshikimate = chorismate + phosphate. The protein operates within metabolic intermediate biosynthesis; chorismate biosynthesis; chorismate from D-erythrose 4-phosphate and phosphoenolpyruvate: step 7/7. Catalyzes the anti-1,4-elimination of the C-3 phosphate and the C-6 proR hydrogen from 5-enolpyruvylshikimate-3-phosphate (EPSP) to yield chorismate, which is the branch point compound that serves as the starting substrate for the three terminal pathways of aromatic amino acid biosynthesis. This reaction introduces a second double bond into the aromatic ring system. This chain is Chorismate synthase, found in Neisseria meningitidis serogroup C / serotype 2a (strain ATCC 700532 / DSM 15464 / FAM18).